Reading from the N-terminus, the 553-residue chain is MYRVKSESDCDMIHQEQMDSPVADDGSSGGSPHRGGGPPLKKGPWTSAEDAILVDYVKKHGEGNWNAVQKNTGLFRCGKSCRLRWANHLRPNLKKGAFTAEEERLIIQLHSKMGNKWARMAAHLPGRTDNEIKNYWNTRIKRCQRAGLPIYPTSVCNQSSNEDQQCSSDFDCGENLSNDLLNANGLYLPDFTCDNFIANSEALPYAPHLSAVSISNLLGQSFASKSCSFMDQVNQTGMLKQSDGVLPGLSDTINGVISSVDQFSNDSEKLKQAVGFDYLHEANSTSKIIAPFGGALNGSHAFLNGNFSASRPTSGPLKMELPSLQDTESDPNSWLKYTVAPALQPTELVDPYLQSPAATPSVKSECASPRNSGLLEELIHEAQTLRSGKNQQTSVISSSSSVGTPCNTTVLSPEFDMCQEYWEEQHPGPFLNDCAPFSGNSFTESTPPVSAASPDIFQLSKVSPAQSTSMGSGEQVMGPKYEPGDTSPHPENFRPDALFSGNTADPSVFNNAIAMLLGNDLSIDCRPVLGDGIMFNSSSWSNMPHACEMSEFK.

Basic and acidic residues predominate over residues 1–17 (MYRVKSESDCDMIHQEQ). The tract at residues 1 to 45 (MYRVKSESDCDMIHQEQMDSPVADDGSSGGSPHRGGGPPLKKGPW) is disordered. Residues 27 to 38 (SSGGSPHRGGGP) show a composition bias toward gly residues. HTH myb-type domains are found at residues 37–89 (GPPL…ANHL) and 90–144 (RPNL…KRCQ). DNA-binding regions (H-T-H motif) lie at residues 65 to 89 (WNAV…ANHL) and 117 to 140 (WARM…NTRI). Residues 464 to 489 (PAQSTSMGSGEQVMGPKYEPGDTSPH) form a disordered region.

As to quaternary structure, interacts with MYBS1. Expressed in aleurone cells, inflorescence shoot apical region, stamen primordia, and tapetum cells of the anther. Expressed at low level in roots and vegetative shoots.

It localises to the nucleus. In terms of biological role, transcriptional activator of gibberellin-dependent alpha-amylase expression in aleurone cells. Involved in pollen and floral organs development. May bind to the 5'-TAACAAA-3' box of alpha-amylase promoter. Required for anther development. Functions in parallel with UDT1 to regulate early anther development. Functions upstream of the transcription factor TDR and may positively regulate its transcription. Required for pollen development. Probably required for controlling tapetal cell size and promoting tapetal programmed cell death (PCD) during anther development. Required for exine and Ubisch body formation in anthers. Interacts with the DNA specific motifs of giberrellin-up-regulated genes of anthers and regulates their expression. Positively regulates the expression of the laurate hydroxylase CYP703A3, known to be essential for the development of pollen exine and anther epicuticular layer. Functions with MYBS1 to integrate diverse nutrient starvation and gibberellin (GA) signaling pathways during germination of grains. Sugar, nitrogen and phosphate starvation signals converge and interconnect with GA to promote the co-nuclear import of GAMYB and MYBS1, resulting in the expression of a large set of GA-inducible hydrolases, transporters and regulators that are essential for mobilization of nutrient reserves in the endosperm to support seedling growth. The chain is Transcription factor GAMYB from Oryza sativa subsp. japonica (Rice).